A 230-amino-acid polypeptide reads, in one-letter code: Acyl-protein thioesterase 1 (230 aa).

Residues S119, D174, and H208 each act as charge relay system in the active site. K224 carries the N6-acetyllysine modification.

This sequence belongs to the AB hydrolase superfamily. AB hydrolase 2 family. As to quaternary structure, homodimer.

Its subcellular location is the cytoplasm. The protein localises to the cell membrane. The protein resides in the nucleus membrane. It localises to the endoplasmic reticulum. It catalyses the reaction S-hexadecanoyl-L-cysteinyl-[protein] + H2O = L-cysteinyl-[protein] + hexadecanoate + H(+). The enzyme catalyses 1-hexadecanoyl-sn-glycero-3-phosphocholine + H2O = sn-glycerol 3-phosphocholine + hexadecanoate + H(+). It carries out the reaction a 1-(9Z-octadecenoyl)-2-acyl-sn-glycero-3-phosphocholine + H2O = a 2-acyl-sn-glycero-3-phosphocholine + (9Z)-octadecenoate + H(+). Acts as an acyl-protein thioesterase. Hydrolyzes fatty acids from S-acylated cysteine residues in proteins such as trimeric G alpha proteins or HRAS. Acts as a palmitoyl thioesterase that catalyzes depalmitoylation of proteins, such as ADRB2, KCNMA1 and SQSTM1. Acts as a negative regulator of autophagy by mediating palmitoylation of SQSTM1, decreasing affinity between SQSTM1 and ATG8 proteins and recruitment of ubiquitinated cargo proteins to autophagosomes. Acts as a lysophospholipase and hydrolyzes lysophosphatidylcholine (lyso-PC). Also hydrolyzes lysophosphatidylethanolamine (lyso-PE), lysophosphatidylinositol (lyso-PI) and lysophosphatidylserine (lyso-PS). Has much higher thioesterase activity than lysophospholipase activity. Contributes to the production of lysophosphatidic acid (LPA) during blood coagulation by recognizing and cleaving plasma phospholipids to generate lysophospholipids which in turn act as substrates for ENPP2 to produce LPA. In Mus musculus (Mouse), this protein is Acyl-protein thioesterase 1 (Lypla1).